The primary structure comprises 345 residues: tRNA N6-adenosine threonylcarbamoyltransferase (345 aa).

Fe cation contacts are provided by histidine 109 and histidine 113. Substrate is bound by residues 136–140 (TVSGG), aspartate 169, glycine 182, aspartate 186, and asparagine 284. Aspartate 312 is a binding site for Fe cation.

The protein belongs to the KAE1 / TsaD family. It depends on Fe(2+) as a cofactor.

Its subcellular location is the cytoplasm. It carries out the reaction L-threonylcarbamoyladenylate + adenosine(37) in tRNA = N(6)-L-threonylcarbamoyladenosine(37) in tRNA + AMP + H(+). In terms of biological role, required for the formation of a threonylcarbamoyl group on adenosine at position 37 (t(6)A37) in tRNAs that read codons beginning with adenine. Is involved in the transfer of the threonylcarbamoyl moiety of threonylcarbamoyl-AMP (TC-AMP) to the N6 group of A37, together with TsaE and TsaB. TsaD likely plays a direct catalytic role in this reaction. The sequence is that of tRNA N6-adenosine threonylcarbamoyltransferase from Chlorobium phaeovibrioides (strain DSM 265 / 1930) (Prosthecochloris vibrioformis (strain DSM 265)).